Here is a 474-residue protein sequence, read N- to C-terminus: L-arabinose isomerase (474 aa).

The Mn(2+) site is built by Glu-306, Glu-331, His-348, and His-447.

Belongs to the arabinose isomerase family. It depends on Mn(2+) as a cofactor.

The enzyme catalyses beta-L-arabinopyranose = L-ribulose. Its pathway is carbohydrate degradation; L-arabinose degradation via L-ribulose; D-xylulose 5-phosphate from L-arabinose (bacterial route): step 1/3. Functionally, catalyzes the conversion of L-arabinose to L-ribulose. In Lactiplantibacillus plantarum (strain ATCC BAA-793 / NCIMB 8826 / WCFS1) (Lactobacillus plantarum), this protein is L-arabinose isomerase.